The sequence spans 74 residues: Lantibiotic lichenicidin A1 (74 aa).

The propeptide occupies Met1–Gly42. Thr43 is modified (2-oxobutanoic acid). Residues Thr45 to Cys49 constitute a cross-link (beta-methyllanthionine (Thr-Cys)). Ser47 bears the 2,3-didehydroalanine (Ser) mark. Residue Thr48 is modified to (Z)-2,3-didehydrobutyrine. The lanthionine (Ser-Cys) cross-link spans Ser53–Cys63. 2 consecutive cross-links (beta-methyllanthionine (Thr-Cys)) follow at residues Thr64 to Cys69 and Thr66 to Cys73.

In terms of processing, maturation of lantibiotics involves the enzymatic conversion of Thr, and Ser into dehydrated AA and the formation of thioether bonds with cysteine. This is followed by membrane translocation and cleavage of the modified precursor.

It localises to the secreted. It is found in the cell wall. Functionally, lanthionine-containing peptide antibiotic (lantibiotic) active on Gram-positive bacteria. The bactericidal activity of lantibiotics is based on depolarization of energized bacterial cytoplasmic membranes, initiated by the formation of aqueous transmembrane pores. When present individually, LchA1 exhibits activity towards L.lactis HP. When combined with LchA2, it displays activity towards a broad spectrum of non-pathogenic and pathogenic Gram-positive bacteria including strains of L.monocytogenes, methicillin-resistant S.aureus, S.pneumoniae and strains of vancomycin-resistant enterococci, but not towards E.faecium L4001 and BM4147-1. Combined LchA1 and LchA2 peptides also inhibit Bacillus sp. HIL-Y85/54728, L.lactis DPC3417 and B.halodurans C-125, which produce lantibiotics themselves. Inactivated by proteinase K and pronase E, but not by trypsin and chymotrypsin. The protein is Lantibiotic lichenicidin A1 of Bacillus licheniformis (strain ATCC 14580 / DSM 13 / JCM 2505 / CCUG 7422 / NBRC 12200 / NCIMB 9375 / NCTC 10341 / NRRL NRS-1264 / Gibson 46).